The following is a 529-amino-acid chain: UDP-glucuronosyltransferase 2B33 (529 aa).

The first 24 residues, 1–24, serve as a signal peptide directing secretion; that stretch reads MSVKWTSIILLIQLSFYFSSGSCG. N-linked (GlcNAc...) asparagine glycosylation is found at asparagine 67 and asparagine 68. A helical membrane pass occupies residues 494 to 514; it reads IGFLLACVATVIFIIMKCCLF.

The protein belongs to the UDP-glycosyltransferase family.

The protein resides in the microsome membrane. Its subcellular location is the endoplasmic reticulum membrane. It catalyses the reaction glucuronate acceptor + UDP-alpha-D-glucuronate = acceptor beta-D-glucuronoside + UDP + H(+). UDPGTs are of major importance in the conjugation and subsequent elimination of potentially toxic xenobiotics and endogenous compounds. This isozyme has glucuronidating capacity on estriol and does not catalyze the glucuronidation of beta-estradiol. Capable of conjugating 4-hydroxyestrone, androsterone, diclofenac, and hyodeoxycholic acid. In Macaca mulatta (Rhesus macaque), this protein is UDP-glucuronosyltransferase 2B33 (UGT2B33).